Reading from the N-terminus, the 108-residue chain is Transcription initiation factor IIA subunit 2 (108 aa).

This sequence belongs to the TFIIA subunit 2 family. In terms of assembly, TFIIA is a heterodimer of the large unprocessed subunit 1 and a small subunit gamma. It was originally believed to be a heterotrimer of an alpha, a beta and a gamma subunit. Interacts with NCOA6 general coactivator. TFIIA forms a complex with TBP.

The protein resides in the nucleus. Its function is as follows. TFIIA is a component of the transcription machinery of RNA polymerase II and plays an important role in transcriptional activation. TFIIA in a complex with TBP mediates transcriptional activity. This is Transcription initiation factor IIA subunit 2 (gtf2a2) from Oncorhynchus mykiss (Rainbow trout).